Consider the following 406-residue polypeptide: Isocitrate dehydrogenase [NADP] (406 aa).

NADP(+) contacts are provided by Lys-72, Thr-75, Thr-77, and Arg-82. 5 residues coordinate D-threo-isocitrate: Ser-94, Asn-96, Arg-100, Glu-110, and Arg-132. Asp-250, Asp-273, and Asp-277 together coordinate Mn(2+). Residues Gly-308, Thr-309, Val-310, His-313, and Asn-326 each contribute to the NADP(+) site.

The protein belongs to the isocitrate and isopropylmalate dehydrogenases family. As to quaternary structure, homodimer. Mg(2+) serves as cofactor. Requires Mn(2+) as cofactor.

It carries out the reaction D-threo-isocitrate + NADP(+) = 2-oxoglutarate + CO2 + NADPH. Its function is as follows. Catalyzes the oxidative decarboxylation of isocitrate to 2-oxoglutarate and carbon dioxide with the concomitant reduction of NADP(+). The sequence is that of Isocitrate dehydrogenase [NADP] (icd) from Sphingobium yanoikuyae (Sphingomonas yanoikuyae).